The chain runs to 150 residues: Aspartate 1-decarboxylase 2 (150 aa).

Serine 24 serves as the catalytic Schiff-base intermediate with substrate; via pyruvic acid. Pyruvic acid (Ser) is present on serine 24. Threonine 56 is a substrate binding site. The active-site Proton donor is the tyrosine 57. A substrate-binding site is contributed by 72-74 (GAA).

It belongs to the PanD family. As to quaternary structure, heterooctamer of four alpha and four beta subunits. It depends on pyruvate as a cofactor. Is synthesized initially as an inactive proenzyme, which is activated by self-cleavage at a specific serine bond to produce a beta-subunit with a hydroxyl group at its C-terminus and an alpha-subunit with a pyruvoyl group at its N-terminus.

The protein localises to the cytoplasm. It catalyses the reaction L-aspartate + H(+) = beta-alanine + CO2. It participates in cofactor biosynthesis; (R)-pantothenate biosynthesis; beta-alanine from L-aspartate: step 1/1. Functionally, catalyzes the pyruvoyl-dependent decarboxylation of aspartate to produce beta-alanine. This Mesorhizobium japonicum (strain LMG 29417 / CECT 9101 / MAFF 303099) (Mesorhizobium loti (strain MAFF 303099)) protein is Aspartate 1-decarboxylase 2.